The chain runs to 129 residues: N16.2 matrix protein (129 aa).

The N-terminal stretch at 1–23 (MKCTLRWTITALVLLGICHLARP) is a signal peptide. Tandem repeats lie at residues 91–92 (NG), 93–94 (NG), 95–96 (DG), 97–98 (NG), and 99–100 (NG). The 5 X 2 AA tandem repeats of N-G stretch occupies residues 91-100 (NGNGDGNGNG).

It belongs to the N16 matrix protein family. In terms of assembly, heterooligomer; disulfide-linked. Pif97, Pif80, N16 and other proteins form a complex. As to expression, component of conchiolin, the organic matrix of nacre. Expressed at extremely high levels in the dorsal region of the mantle, which region may be responsible for the nacreous layer formation, but only in trace amounts at the mantle edge, which region may be responsible for the prismatic layer formation.

Its subcellular location is the secreted. It localises to the extracellular space. The protein localises to the extracellular matrix. Its function is as follows. May be specifically involved in the formation of the nacreous layer. In Pinctada fucata (Akoya pearl oyster), this protein is N16.2 matrix protein.